Consider the following 807-residue polypeptide: Shutoff protein (807 aa).

Residues 1–88 (MESVEKKDSL…QVGRGDERHG (88 aa)) form a disordered region. Positions 16–29 (FATTASTDAANAPT) are enriched in polar residues. Composition is skewed to basic and acidic residues over residues 59–70 (RSVPTEDKKQDQ) and 79–88 (QVGRGDERHG). The tract at residues 280–345 (VMSELIVRRA…AVLVTVELEC (66 aa)) is binding to host EIF4G. One can recognise an RRM domain in the interval 348-466 (RFFADPEMQR…DLWTAFNERS (119 aa)). Tyrosine 365 and tyrosine 682 each carry phosphotyrosine; by host. Residues 684–807 (DPQSGEELNP…AGTARSPTQP (124 aa)) form a disordered region. Residues 726–743 (GRGGILGQSGRGGFGRGG) show a composition bias toward gly residues. Positions 744 to 755 (GGHDGRLGEPRR) are enriched in basic and acidic residues. Positions 756–765 (GSFRGRRGVR) are enriched in basic residues.

It belongs to the adenoviridae shutoff protein family. Monomer. Interacts with hexon protein; this interaction allows chaperoning and trimerization of hexon proteins. Interacts (via N-terminus) with host initiation factor EIF4G (via C-terminus). Interacts (via RRM domain) with viral mRNAs that contain the tripartite leader; this interaction allows ribosome shunting and expression of viral late mRNAs. Might be cleaved by the viral protease. Post-translationally, phosphorylated. Tyrosine phosphorylation enhances preferential binding to tripartite leader mRNAs and allows ribosome shunting. In terms of processing, methylated. Asymmetric dimethylation by host PRMT1 of the Arg/Gly-rich region may regulate shutoff protein binding to hexon and promote the capsid assembly in the nucleus.

The protein localises to the host cytoplasm. In terms of biological role, protein that inhibits host translation while promoting late viral translation by ribosome shunting. Blocks host cap-dependent translation by binding to eIF4G, displacing MKNK1 from cap initiation complexes and preventing EIF4E phosphorylation. Binds to the tripartite leader sequence of viral late mRNAs and recruits host eIF4G, PABPC1/poly-A binding protein and 40S ribosomes subunits on viral mRNAs, allowing ribosome shunting and efficient translation of late viral mRNAs even though conventional translation via ribosome scanning from the cap has been shut off in the host cell. During assembly, acts as a chaperone protein that helps hexon proteins assembly into trimers. This chain is Shutoff protein, found in Homo sapiens (Human).